The sequence spans 794 residues: Signal transducer and activator of transcription 5A (794 aa).

A Phosphotyrosine modification is found at Tyr90. A Phosphoserine modification is found at Ser128. Residues 589–686 (WNDGAILGFV…EVFSKYYTPV (98 aa)) form the SH2 domain. Residue Tyr682 is modified to Phosphotyrosine. At Tyr694 the chain carries Phosphotyrosine; by JAK2. Residues 771-794 (PMDSLEPSLPPPTGLFTPGRGSLS) are disordered.

It belongs to the transcription factor STAT family. Forms a homodimer or a heterodimer with a related family member. Binds NR3C1. Interacts with NCOA1 and SOCS7. Interacts with ERBB4. Interacts with EBF4. Interacts with CD69. In terms of processing, ISGylated. Tyrosine phosphorylated in response to KITLG/SCF, IL2, IL3, IL7, IL15, CSF2/GMCSF, GH1, PRL, EPO and THPO. Activated KIT promotes phosphorylation on tyrosine residues and subsequent translocation to the nucleus. Tyrosine phosphorylated in response to constitutively activated FGFR1, FGFR2, FGFR3 and FGFR4. Tyrosine phosphorylation is required for DNA-binding activity and dimerization. Serine phosphorylation is also required for maximal transcriptional activity. Tyrosine phosphorylated in response to signaling via activated FLT3; wild-type FLT3 results in much weaker phosphorylation than constitutively activated mutant FLT3. Alternatively, can be phosphorylated by JAK2 at Tyr-694.

The protein localises to the cytoplasm. The protein resides in the nucleus. In terms of biological role, carries out a dual function: signal transduction and activation of transcription. Mediates cellular responses to the cytokine KITLG/SCF and other growth factors. May mediate cellular responses to activated FGFR1, FGFR2, FGFR3 and FGFR4. Binds to the GAS element and activates PRL-induced transcription. Regulates the expression of milk proteins during lactation. The sequence is that of Signal transducer and activator of transcription 5A (STAT5A) from Bos taurus (Bovine).